Consider the following 306-residue polypeptide: UDP-N-acetylenolpyruvoylglucosamine reductase (306 aa).

In terms of domain architecture, FAD-binding PCMH-type spans 25 to 188; the sequence is RVGGPADWLF…IEARFRAEPG (164 aa). R168 is a catalytic residue. The span at 199 to 214 shows a compositional bias: basic and acidic residues; the sequence is EQLARRDASQPTKDRS. The disordered stretch occupies residues 199–232; that stretch reads EQLARRDASQPTKDRSAGSTFRNPAGYSSTGRAD. The segment covering 215-229 has biased composition (polar residues); the sequence is AGSTFRNPAGYSSTG. Catalysis depends on S217, which acts as the Proton donor. E299 is a catalytic residue.

It belongs to the MurB family. The cofactor is FAD.

It localises to the cytoplasm. It catalyses the reaction UDP-N-acetyl-alpha-D-muramate + NADP(+) = UDP-N-acetyl-3-O-(1-carboxyvinyl)-alpha-D-glucosamine + NADPH + H(+). Its pathway is cell wall biogenesis; peptidoglycan biosynthesis. Functionally, cell wall formation. In Paracoccus denitrificans (strain Pd 1222), this protein is UDP-N-acetylenolpyruvoylglucosamine reductase.